Reading from the N-terminus, the 293-residue chain is Proline iminopeptidase (293 aa).

Residues 28–277 (KPLVLLHGGP…YSRHMPFVEE (250 aa)) form the AB hydrolase-1 domain. Serine 104 serves as the catalytic Nucleophile. Aspartate 244 is a catalytic residue. Histidine 271 functions as the Proton donor in the catalytic mechanism.

This sequence belongs to the peptidase S33 family.

The enzyme catalyses Release of N-terminal proline from a peptide.. Functionally, releases the N-terminal proline from various substrates. This is Proline iminopeptidase from Clostridioides difficile (strain 630) (Peptoclostridium difficile).